The following is a 115-amino-acid chain: Large ribosomal subunit protein bL20 (115 aa).

The protein belongs to the bacterial ribosomal protein bL20 family.

Its function is as follows. Binds directly to 23S ribosomal RNA and is necessary for the in vitro assembly process of the 50S ribosomal subunit. It is not involved in the protein synthesizing functions of that subunit. The sequence is that of Large ribosomal subunit protein bL20 from Prochlorococcus marinus (strain MIT 9515).